The sequence spans 157 residues: Protein E6 (157 aa).

2 zinc fingers span residues 39–75 and 112–148; these read CNFC…CRSC and CQTC…CRQC.

Belongs to the papillomaviridae E6 protein family. As to quaternary structure, forms homodimers. Interacts with ubiquitin-protein ligase UBE3A/E6-AP; this interaction stimulates UBE3A ubiquitin activity. Interacts with host BAK1.

The protein resides in the host cytoplasm. It localises to the host nucleus. In terms of biological role, plays a major role in the induction and maintenance of cellular transformation. E6 associates with host UBE3A/E6-AP ubiquitin-protein ligase and modulates its activity. Protects host keratinocytes from apoptosis by mediating the degradation of host BAK1. May also inhibit host immune response. The sequence is that of Protein E6 from Homo sapiens (Human).